The sequence spans 507 residues: ATP synthase subunit alpha, chloroplastic (507 aa).

Position 170–177 (Gly170–Thr177) interacts with ATP.

This sequence belongs to the ATPase alpha/beta chains family. F-type ATPases have 2 components, CF(1) - the catalytic core - and CF(0) - the membrane proton channel. CF(1) has five subunits: alpha(3), beta(3), gamma(1), delta(1), epsilon(1). CF(0) has four main subunits: a, b, b' and c.

The protein resides in the plastid. Its subcellular location is the chloroplast thylakoid membrane. The enzyme catalyses ATP + H2O + 4 H(+)(in) = ADP + phosphate + 5 H(+)(out). In terms of biological role, produces ATP from ADP in the presence of a proton gradient across the membrane. The alpha chain is a regulatory subunit. This is ATP synthase subunit alpha, chloroplastic from Marchantia polymorpha (Common liverwort).